The following is a 479-amino-acid chain: Protein kinase 2 (479 aa).

Residues 1-136 are disordered; that stretch reads MGKGQSKIKN…NGNDDEDEGP (136 aa). Low complexity-rich tracts occupy residues 52 to 65 and 79 to 96; these read AQQQQQQQQTTTAA and IPAPATQTPITQTGTPTI. Residues 102 to 115 are compositionally biased toward polar residues; that stretch reads NTDNNNINGASNEA. The region spanning 153 to 407 is the Protein kinase domain; that stretch reads FELLNVIGKG…GGEVKQHPWF (255 aa). Residues 159 to 167 and K182 each bind ATP; that span reads IGKGSFGKV. Residue D276 is the Proton acceptor of the active site. Residue T309 is modified to Phosphothreonine; by autocatalysis. The AGC-kinase C-terminal domain maps to 408–479; sequence KNIDWEKLDR…TYVADSILKD (72 aa). Residue T470 is modified to Phosphothreonine.

This sequence belongs to the protein kinase superfamily. AGC Ser/Thr protein kinase family. S6 kinase subfamily. In terms of processing, seems to be myristoylated.

It is found in the cytoplasm. The protein resides in the cell membrane. It catalyses the reaction L-seryl-[protein] + ATP = O-phospho-L-seryl-[protein] + ADP + H(+). It carries out the reaction L-threonyl-[protein] + ATP = O-phospho-L-threonyl-[protein] + ADP + H(+). In terms of biological role, required for morphogenesis during multicellular development. Phosphorylates talB, gefN, gefS, PI4P 5-kinase and gacQ. This chain is Protein kinase 2 (pkgB), found in Dictyostelium discoideum (Social amoeba).